The primary structure comprises 363 residues: 3-dehydroquinate synthase (363 aa).

NAD(+) contacts are provided by residues 74–79, 108–112, 132–133, Lys145, Lys154, and 172–175; these read DGEQYK, GVIGD, TT, and CLKT. Glu187, His250, and His267 together coordinate Zn(2+).

The protein belongs to the sugar phosphate cyclases superfamily. Dehydroquinate synthase family. Requires NAD(+) as cofactor. The cofactor is Co(2+). Zn(2+) serves as cofactor.

Its subcellular location is the cytoplasm. It carries out the reaction 7-phospho-2-dehydro-3-deoxy-D-arabino-heptonate = 3-dehydroquinate + phosphate. The protein operates within metabolic intermediate biosynthesis; chorismate biosynthesis; chorismate from D-erythrose 4-phosphate and phosphoenolpyruvate: step 2/7. Catalyzes the conversion of 3-deoxy-D-arabino-heptulosonate 7-phosphate (DAHP) to dehydroquinate (DHQ). This is 3-dehydroquinate synthase from Buchnera aphidicola subsp. Acyrthosiphon pisum (strain APS) (Acyrthosiphon pisum symbiotic bacterium).